We begin with the raw amino-acid sequence, 200 residues long: Glycerol-3-phosphate acyltransferase (200 aa).

The next 5 membrane-spanning stretches (helical) occupy residues 8-28, 57-77, 88-108, 114-134, and 159-179; these read ALAL…GMVL, LAAA…VLAA, IAGL…FAGG, FLGI…LAWL, and FLLG…LIFW.

This sequence belongs to the PlsY family. Probably interacts with PlsX.

The protein resides in the cell inner membrane. The catalysed reaction is an acyl phosphate + sn-glycerol 3-phosphate = a 1-acyl-sn-glycero-3-phosphate + phosphate. Its pathway is lipid metabolism; phospholipid metabolism. Catalyzes the transfer of an acyl group from acyl-phosphate (acyl-PO(4)) to glycerol-3-phosphate (G3P) to form lysophosphatidic acid (LPA). This enzyme utilizes acyl-phosphate as fatty acyl donor, but not acyl-CoA or acyl-ACP. This Roseobacter denitrificans (strain ATCC 33942 / OCh 114) (Erythrobacter sp. (strain OCh 114)) protein is Glycerol-3-phosphate acyltransferase.